Consider the following 311-residue polypeptide: MSQRDTLVHLFAGGCGGTVGAILTCPLEVVKTRLQSSSVTLYISEVQLNTMAGASVNRVVSPGPLHCLKAILEKEGPRSLFRGLGPNLVGVAPSRAIYFAAYSNCKEKLNGVFDPDSTQVHMASAAMAGFTAITATNPIWLIKTRLQLDARTRGEKQMGAFECVRKVYQTDGLRGFYRGMSASYAGISETVIHFVIYESIKQKLLECKTASMMETDEESVKEASDFVRMMLAAATSKTCATTIAYPHEVVRTRLREEGTKYRSFFQTLSLIVQEEGYGSLYRGLTTHLVRQIPNTAIMMATYELVVYLLNG.

3 Solcar repeats span residues 4–108, 116–203, and 224–308; these read RDTL…CKEK, DSTQ…IKQK, and SDFV…VVYL. A run of 6 helical transmembrane segments spans residues 7-27, 41-57, 111-131, 180-200, 226-246, and 291-311; these read LVHLFAGGCGGTVGAILTCPL, LYISEVQLNTMAGASVN, GVFDPDSTQVHMASAAMAGFT, MSASYAGISETVIHFVIYESI, FVRMMLAAATSKTCATTIAYP, and QIPNTAIMMATYELVVYLLNG.

It belongs to the mitochondrial carrier (TC 2.A.29) family.

The protein localises to the mitochondrion inner membrane. The catalysed reaction is UTP(in) + CTP(out) = UTP(out) + CTP(in). It carries out the reaction CTP(out) + UDP(in) = CTP(in) + UDP(out). It catalyses the reaction UMP(in) + CTP(out) = UMP(out) + CTP(in). The enzyme catalyses dUTP(in) + CTP(out) = dUTP(out) + CTP(in). The catalysed reaction is dUMP(in) + CTP(out) = dUMP(out) + CTP(in). It carries out the reaction CDP(in) + CTP(out) = CDP(out) + CTP(in). It catalyses the reaction CTP(out) + CMP(in) = CTP(in) + CMP(out). The enzyme catalyses dCTP(in) + CTP(out) = dCTP(out) + CTP(in). The catalysed reaction is dCDP(in) + CTP(out) = dCDP(out) + CTP(in). It carries out the reaction dCMP(in) + CTP(out) = dCMP(out) + CTP(in). It catalyses the reaction GTP(in) + CTP(out) = GTP(out) + CTP(in). The enzyme catalyses CTP(out) + GDP(in) = CTP(in) + GDP(out). The catalysed reaction is GMP(in) + CTP(out) = GMP(out) + CTP(in). It carries out the reaction dGTP(in) + CTP(out) = dGTP(out) + CTP(in). It catalyses the reaction dGMP(in) + CTP(out) = dGMP(out) + CTP(in). The enzyme catalyses ITP(in) + CTP(out) = ITP(out) + CTP(in). The catalysed reaction is IDP(in) + CTP(out) = IDP(out) + CTP(in). It carries out the reaction IMP(in) + CTP(out) = IMP(out) + CTP(in). It catalyses the reaction CTP(out) = CTP(in). In terms of biological role, mitochondrial transporter that imports/exports pyrimidine nucleotides into and from mitochondria. Selectively transports cytosine, guanosine, inosine and uridine (deoxy)nucleoside mono-, di-, and triphosphates by antiport mechanism. Catalyzes uniport at much lower rate. May import (deoxy)nucleoside triphosphates in exchange for intramitochondrial (deoxy)nucleoside mono- and diphosphates, thus providing precursors necessary for de novo synthesis of mitochondrial DNA and RNA while exporting products of their catabolism. Participates in mitochondrial genome maintenance, regulation of mitochondrial membrane potential and mitochondrial respiration. This Mus musculus (Mouse) protein is Solute carrier family 25 member 36 (Slc25a36).